The chain runs to 282 residues: GDT1-like protein 4 (282 aa).

The N-terminal stretch at 1-26 is a signal peptide; sequence MARRVSTTRLLLLLLLVAAAAAAAAA. 6 helical membrane passes run 67-87, 106-126, 138-158, 189-209, 227-247, and 259-279; these read AGLGLFDAFFASLSMILVSEI, TVLSGALSALVVMTILSTGLG, TNSAATVLYAFFGLRLLYIAW, IFSRFCTPIFLESFVLTFLAE, AVGVAVGATLGHTICTSFAVV, and GTVATIGGLLFLGFSLSSYFY.

This sequence belongs to the GDT1 family.

Its subcellular location is the membrane. This chain is GDT1-like protein 4, found in Oryza sativa subsp. japonica (Rice).